We begin with the raw amino-acid sequence, 204 residues long: N-(5'-phosphoribosyl)anthranilate isomerase (204 aa).

This sequence belongs to the TrpF family.

It catalyses the reaction N-(5-phospho-beta-D-ribosyl)anthranilate = 1-(2-carboxyphenylamino)-1-deoxy-D-ribulose 5-phosphate. Its pathway is amino-acid biosynthesis; L-tryptophan biosynthesis; L-tryptophan from chorismate: step 3/5. The chain is N-(5'-phosphoribosyl)anthranilate isomerase from Bacillus cereus (strain AH820).